A 203-amino-acid polypeptide reads, in one-letter code: Small ribosomal subunit protein uS5 (203 aa).

The span at 1 to 25 (MPGRTRRDGGSESGGKDRRDRRDGG) shows a compositional bias: basic and acidic residues. The segment at 1–36 (MPGRTRRDGGSESGGKDRRDRRDGGRGGAAQEKTPQ) is disordered. Residues 36 to 99 (QFERVVTINR…EEAKKNFFRV (64 aa)) enclose the S5 DRBM domain.

This sequence belongs to the universal ribosomal protein uS5 family. As to quaternary structure, part of the 30S ribosomal subunit. Contacts proteins S4 and S8.

In terms of biological role, with S4 and S12 plays an important role in translational accuracy. Located at the back of the 30S subunit body where it stabilizes the conformation of the head with respect to the body. This chain is Small ribosomal subunit protein uS5, found in Saccharopolyspora erythraea (strain ATCC 11635 / DSM 40517 / JCM 4748 / NBRC 13426 / NCIMB 8594 / NRRL 2338).